Consider the following 494-residue polypeptide: Guanosine-5'-triphosphate,3'-diphosphate pyrophosphatase (494 aa).

The protein belongs to the GppA/Ppx family. GppA subfamily.

It catalyses the reaction guanosine 3'-diphosphate 5'-triphosphate + H2O = guanosine 3',5'-bis(diphosphate) + phosphate + H(+). Its pathway is purine metabolism; ppGpp biosynthesis; ppGpp from GTP: step 2/2. Its function is as follows. Catalyzes the conversion of pppGpp to ppGpp. Guanosine pentaphosphate (pppGpp) is a cytoplasmic signaling molecule which together with ppGpp controls the 'stringent response', an adaptive process that allows bacteria to respond to amino acid starvation, resulting in the coordinated regulation of numerous cellular activities. The protein is Guanosine-5'-triphosphate,3'-diphosphate pyrophosphatase of Shigella flexneri.